The following is a 416-amino-acid chain: Putative UV-damage repair protein UvrX (416 aa).

The UmuC domain occupies 12 to 196; sequence ILCVDMKSFY…RPLSKMWGIG (185 aa). Mg(2+)-binding residues include aspartate 16 and aspartate 115. Glutamate 116 is an active-site residue.

It belongs to the DNA polymerase type-Y family. Mg(2+) serves as cofactor.

The protein is Putative UV-damage repair protein UvrX (uvrX) of Bacillus subtilis (strain 168).